The sequence spans 330 residues: Aspartate--ammonia ligase (330 aa).

This sequence belongs to the class-II aminoacyl-tRNA synthetase family. AsnA subfamily.

Its subcellular location is the cytoplasm. The catalysed reaction is L-aspartate + NH4(+) + ATP = L-asparagine + AMP + diphosphate + H(+). It functions in the pathway amino-acid biosynthesis; L-asparagine biosynthesis; L-asparagine from L-aspartate (ammonia route): step 1/1. The protein is Aspartate--ammonia ligase of Streptococcus thermophilus (strain ATCC BAA-250 / LMG 18311).